A 190-amino-acid chain; its full sequence is Elongation factor P-like protein (190 aa).

Belongs to the elongation factor P family.

This is Elongation factor P-like protein from Serratia proteamaculans (strain 568).